A 279-amino-acid chain; its full sequence is NADPH-dependent 7-cyano-7-deazaguanine reductase (279 aa).

86–88 (IES) provides a ligand contact to substrate. Residue 88 to 89 (SK) participates in NADPH binding. Residue Cys187 is the Thioimide intermediate of the active site. The Proton donor role is filled by Asp194. 226-227 (HE) is a binding site for substrate. 255–256 (RG) serves as a coordination point for NADPH.

This sequence belongs to the GTP cyclohydrolase I family. QueF type 2 subfamily. As to quaternary structure, homodimer.

The protein localises to the cytoplasm. The enzyme catalyses 7-aminomethyl-7-carbaguanine + 2 NADP(+) = 7-cyano-7-deazaguanine + 2 NADPH + 3 H(+). It participates in tRNA modification; tRNA-queuosine biosynthesis. Catalyzes the NADPH-dependent reduction of 7-cyano-7-deazaguanine (preQ0) to 7-aminomethyl-7-deazaguanine (preQ1). The polypeptide is NADPH-dependent 7-cyano-7-deazaguanine reductase (Haemophilus ducreyi (strain 35000HP / ATCC 700724)).